The primary structure comprises 156 residues: Small ribosomal subunit protein uS7 (156 aa).

This sequence belongs to the universal ribosomal protein uS7 family. In terms of assembly, part of the 30S ribosomal subunit. Contacts proteins S9 and S11.

In terms of biological role, one of the primary rRNA binding proteins, it binds directly to 16S rRNA where it nucleates assembly of the head domain of the 30S subunit. Is located at the subunit interface close to the decoding center, probably blocks exit of the E-site tRNA. The chain is Small ribosomal subunit protein uS7 from Shewanella frigidimarina (strain NCIMB 400).